The primary structure comprises 932 residues: 2-oxoglutarate dehydrogenase E1 component (932 aa).

Belongs to the alpha-ketoglutarate dehydrogenase family. Homodimer. Part of the 2-oxoglutarate dehydrogenase (OGDH) complex composed of E1 (2-oxoglutarate dehydrogenase), E2 (dihydrolipoamide succinyltransferase) and E3 (dihydrolipoamide dehydrogenase); the complex contains multiple copies of the three enzymatic components (E1, E2 and E3). Thiamine diphosphate serves as cofactor.

It carries out the reaction N(6)-[(R)-lipoyl]-L-lysyl-[protein] + 2-oxoglutarate + H(+) = N(6)-[(R)-S(8)-succinyldihydrolipoyl]-L-lysyl-[protein] + CO2. E1 component of the 2-oxoglutarate dehydrogenase (OGDH) complex which catalyzes the decarboxylation of 2-oxoglutarate, the first step in the conversion of 2-oxoglutarate to succinyl-CoA and CO(2). The protein is 2-oxoglutarate dehydrogenase E1 component of Staphylococcus aureus (strain bovine RF122 / ET3-1).